Reading from the N-terminus, the 602-residue chain is Elongation factor 4 (602 aa).

The 184-residue stretch at 7-190 (KHIRNFCIVA…AVVQKVPAPS (184 aa)) folds into the tr-type G domain. Residues 19–24 (DHGKST) and 137–140 (NKID) each bind GTP.

This sequence belongs to the TRAFAC class translation factor GTPase superfamily. Classic translation factor GTPase family. LepA subfamily.

The protein resides in the cell membrane. The catalysed reaction is GTP + H2O = GDP + phosphate + H(+). In terms of biological role, required for accurate and efficient protein synthesis under certain stress conditions. May act as a fidelity factor of the translation reaction, by catalyzing a one-codon backward translocation of tRNAs on improperly translocated ribosomes. Back-translocation proceeds from a post-translocation (POST) complex to a pre-translocation (PRE) complex, thus giving elongation factor G a second chance to translocate the tRNAs correctly. Binds to ribosomes in a GTP-dependent manner. The sequence is that of Elongation factor 4 from Clostridium acetobutylicum (strain ATCC 824 / DSM 792 / JCM 1419 / IAM 19013 / LMG 5710 / NBRC 13948 / NRRL B-527 / VKM B-1787 / 2291 / W).